The following is a 342-amino-acid chain: Small ribosomal subunit protein uS2 (342 aa).

The segment at 235 to 283 (EENAPFEQDEPRKPSQKPKQNRPENKPRFDKQAPRAAAKPEVKAEVKPE) is disordered. The segment covering 255–283 (NRPENKPRFDKQAPRAAAKPEVKAEVKPE) has biased composition (basic and acidic residues).

The protein belongs to the universal ribosomal protein uS2 family.

This is Small ribosomal subunit protein uS2 from Acholeplasma laidlawii (strain PG-8A).